The following is a 456-amino-acid chain: Bifunctional protein GlmU (456 aa).

The pyrophosphorylase stretch occupies residues 1–229 (MTKKALSAVI…VMEVEGANNR (229 aa)). UDP-N-acetyl-alpha-D-glucosamine contacts are provided by residues 11–14 (LAAG), Lys-25, Gln-76, 81–82 (GT), 103–105 (YGD), Gly-140, Glu-154, Asn-169, and Asn-227. Asp-105 contributes to the Mg(2+) binding site. Position 227 (Asn-227) interacts with Mg(2+). The tract at residues 230–250 (LQLAALERYLQNKQASKLLLE) is linker. Residues 251 to 456 (GVMIYDPARF…QGWQRPIKKK (206 aa)) form an N-acetyltransferase region. Arg-333 and Lys-351 together coordinate UDP-N-acetyl-alpha-D-glucosamine. The active-site Proton acceptor is His-363. The UDP-N-acetyl-alpha-D-glucosamine site is built by Tyr-366 and Asn-377. Acetyl-CoA-binding positions include Ala-380, 386 to 387 (NY), Ser-405, Ala-423, and Arg-440.

The protein in the N-terminal section; belongs to the N-acetylglucosamine-1-phosphate uridyltransferase family. In the C-terminal section; belongs to the transferase hexapeptide repeat family. In terms of assembly, homotrimer. Mg(2+) is required as a cofactor.

Its subcellular location is the cytoplasm. The enzyme catalyses alpha-D-glucosamine 1-phosphate + acetyl-CoA = N-acetyl-alpha-D-glucosamine 1-phosphate + CoA + H(+). The catalysed reaction is N-acetyl-alpha-D-glucosamine 1-phosphate + UTP + H(+) = UDP-N-acetyl-alpha-D-glucosamine + diphosphate. It participates in nucleotide-sugar biosynthesis; UDP-N-acetyl-alpha-D-glucosamine biosynthesis; N-acetyl-alpha-D-glucosamine 1-phosphate from alpha-D-glucosamine 6-phosphate (route II): step 2/2. The protein operates within nucleotide-sugar biosynthesis; UDP-N-acetyl-alpha-D-glucosamine biosynthesis; UDP-N-acetyl-alpha-D-glucosamine from N-acetyl-alpha-D-glucosamine 1-phosphate: step 1/1. It functions in the pathway bacterial outer membrane biogenesis; LPS lipid A biosynthesis. Its function is as follows. Catalyzes the last two sequential reactions in the de novo biosynthetic pathway for UDP-N-acetylglucosamine (UDP-GlcNAc). The C-terminal domain catalyzes the transfer of acetyl group from acetyl coenzyme A to glucosamine-1-phosphate (GlcN-1-P) to produce N-acetylglucosamine-1-phosphate (GlcNAc-1-P), which is converted into UDP-GlcNAc by the transfer of uridine 5-monophosphate (from uridine 5-triphosphate), a reaction catalyzed by the N-terminal domain. This chain is Bifunctional protein GlmU, found in Haemophilus influenzae (strain PittGG).